The chain runs to 354 residues: Uroporphyrinogen decarboxylase (354 aa).

Residues 27–31, aspartate 77, tyrosine 154, threonine 209, and histidine 327 each bind substrate; that span reads RQAGR.

This sequence belongs to the uroporphyrinogen decarboxylase family. As to quaternary structure, homodimer.

The protein resides in the cytoplasm. The catalysed reaction is uroporphyrinogen III + 4 H(+) = coproporphyrinogen III + 4 CO2. It participates in porphyrin-containing compound metabolism; protoporphyrin-IX biosynthesis; coproporphyrinogen-III from 5-aminolevulinate: step 4/4. Functionally, catalyzes the decarboxylation of four acetate groups of uroporphyrinogen-III to yield coproporphyrinogen-III. The protein is Uroporphyrinogen decarboxylase of Hydrogenovibrio crunogenus (strain DSM 25203 / XCL-2) (Thiomicrospira crunogena).